Here is an 813-residue protein sequence, read N- to C-terminus: Enhancer of polycomb homolog 1 (813 aa).

3 disordered regions span residues 310 to 403 (FKHQ…PFAF), 484 to 513 (MLSS…SKDL), and 528 to 577 (FRPR…SSGS). Basic and acidic residues predominate over residues 311–333 (KHQDATDSKEFKVNKQDKADLIR). A Glycyl lysine isopeptide (Lys-Gly) (interchain with G-Cter in SUMO2) cross-link involves residue Lys319. Residues 346-361 (PPSAAAPQQQSPAALP) show a composition bias toward low complexity. Positions 486–513 (SSPQPSPVNQFANTSEPNTSDRSSSKDL) are enriched in polar residues. Ser538 carries the post-translational modification Phosphoserine. A compositionally biased stretch (low complexity) spans 564–577 (TCSTSTQNRSSSGS). Residue Lys650 forms a Glycyl lysine isopeptide (Lys-Gly) (interchain with G-Cter in SUMO2) linkage. The segment at 779–813 (VPSSSSVDSVPRENHESEKPALNNIADNTVAMEVT) is disordered. Basic and acidic residues predominate over residues 788 to 797 (VPRENHESEK).

The protein belongs to the enhancer of polycomb family. As to quaternary structure, component of the NuA4 histone acetyltransferase complex which contains the catalytic subunit KAT5/TIP60 and the subunits EP400, TRRAP/PAF400, BRD8/SMAP, EPC1, DMAP1/DNMAP1, RUVBL1/TIP49, RUVBL2, ING3, actin, ACTL6A/BAF53A, MORF4L1/MRG15, MORF4L2/MRGX, MRGBP, YEATS4/GAS41, VPS72/YL1 and MEAF6. KAT5/TIP60, EPC1, and ING3 together constitute a minimal HAT complex termed Piccolo NuA4. Component of a NuA4-related complex which contains EP400, TRRAP/PAF400, SRCAP, BRD8/SMAP, EPC1, DMAP1/DNMAP1, RUVBL1/TIP49, RUVBL2, actin, ACTL6A/BAF53A, VPS72 and YEATS4/GAS41. Interacts with TRIM27. Interacts with MBTD1; interaction is direct and promotes recruitment of MBTD1 into the NuA4 histone acetyltransferase complex. Expressed in adult brain, heart, kidney, liver, lung, skeletal muscle and testis. Expressed in male germ cells, present in round spermatids of steps 1 to 4.

The protein resides in the nucleus. It localises to the cytoplasm. Its function is as follows. Component of the NuA4 histone acetyltransferase (HAT) complex, a multiprotein complex involved in transcriptional activation of select genes principally by acetylation of nucleosomal histones H4 and H2A. The NuA4 complex plays a direct role in repair of DNA double-strand breaks (DSBs) by promoting homologous recombination (HR). The NuA4 complex is also required for spermatid development by promoting acetylation of histones: histone acetylation is required for histone replacement during the transition from round to elongating spermatids. In the NuA4 complex, EPC1 is required to recruit MBTD1 into the complex. The chain is Enhancer of polycomb homolog 1 from Mus musculus (Mouse).